Reading from the N-terminus, the 913-residue chain is Trafficking kinesin-binding protein 2 (913 aa).

The segment covering 11-21 (SQTGEENLMSS) has biased composition (polar residues). Residues 11-31 (SQTGEENLMSSNHRDSESITD) are disordered. An HAP1 N-terminal domain is found at 48–353 (EEQLPQYKLR…QEEIKELRNK (306 aa)). A coiled-coil region spans residues 134 to 355 (QALLKRNHVL…EIKELRNKAG (222 aa)). The interaction with HGS stretch occupies residues 359 to 507 (HLCFSQAYGV…KQFFAEEWER (149 aa)). Residues 442 to 478 (ESGVQQTEDKTLPNQGSSTEVPGNSHPRDPPGLPEDS) form a disordered region. Positions 453 to 463 (LPNQGSSTEVP) are enriched in polar residues. Positions 502 to 519 (AEEWERKLQILAEQEEEV) form a coiled coil. Low complexity-rich tracts occupy residues 688-704 (SSGF…GSAS) and 780-789 (PSQSPCSSPV). Disordered regions lie at residues 688 to 707 (SSGF…SNTA) and 769 to 790 (ALAT…SPVP).

This sequence belongs to the milton family. As to quaternary structure, interacts with RHOT1/Miro-1 and RHOT2/Miro-2. Interacts with GABA-A receptor and O-GlcNAc transferase. Interacts with HGS. O-glycosylated. As to expression, present in heart and brain (at protein level).

It is found in the cytoplasm. The protein localises to the early endosome. Its subcellular location is the mitochondrion. Functionally, may regulate endosome-to-lysosome trafficking of membrane cargo, including EGFR. In Rattus norvegicus (Rat), this protein is Trafficking kinesin-binding protein 2 (Trak2).